The following is a 1003-amino-acid chain: Leucine-rich repeat receptor-like serine/threonine-protein kinase BAM1 (1003 aa).

The N-terminal stretch at 1 to 19 (MKLFLLLLFLLHISHTFTA) is a signal peptide. The Extracellular segment spans residues 20–640 (SRPISEFRAL…HSKGPLSASM (621 aa)). LRR repeat units lie at residues 68-92 (RRHV…VSHL), 93-116 (RLLQ…ISSL), 117-140 (SGLR…ISSG), 142-165 (VNLR…VTNL), 166-191 (TQLR…SWPV), 193-213 (EYLA…IGNL), 215-238 (TLRE…IGNL), 239-262 (SELV…IGKL), 263-285 (QKLD…ELGT), 286-310 (LSSL…FAEL), 312-334 (NLTL…IGDL), 335-358 (PELE…LGEN), 359-382 (GKLN…MCSG), 385-406 (LETL…LGKC), 407-430 (ESLT…LFGL), 432-454 (KLTQ…GGVS), 455-480 (VNLG…NFTG), 482-502 (QKLL…VGKL), 503-526 (QQLS…ISRC), 527-550 (KLLT…ITAM), 551-574 (KILN…ISSM), and 575-598 (QSLT…GQFS). Residues N80, N97, N123, N130, N153, and N164 are each glycosylated (N-linked (GlcNAc...) asparagine). N212 and N237 each carry an N-linked (GlcNAc...) asparagine glycan. 2 N-linked (GlcNAc...) asparagine glycosylation sites follow: N312 and N346. An N-linked (GlcNAc...) asparagine glycan is attached at N420. N-linked (GlcNAc...) asparagine glycosylation is present at N477. N557, N586, and N601 each carry an N-linked (GlcNAc...) asparagine glycan. The chain crosses the membrane as a helical span at residues 641-661 (KLLLVLGLLVCSIAFAVVAII). The Cytoplasmic portion of the chain corresponds to 662–1003 (KARSLKKASE…VQSPPDLLNL (342 aa)). At T686 the chain carries Phosphothreonine. The Protein kinase domain maps to 694–971 (LKEDNIIGKG…VQILTEIPKL (278 aa)). ATP is bound by residues 700 to 708 (IGKGGAGIV) and K722. Y769 and Y807 each carry phosphotyrosine. D820 functions as the Proton acceptor in the catalytic mechanism. Residue S855 is modified to Phosphoserine. Phosphotyrosine is present on residues Y863 and Y870. The residue at position 871 (T871) is a Phosphothreonine. Residues 969–1003 (PKLPPSKDQPMTESAPESELSPKSGVQSPPDLLNL) form a disordered region. At S996 the chain carries Phosphoserine.

This sequence belongs to the protein kinase superfamily. Ser/Thr protein kinase family. In terms of assembly, self-interacts and interacts with BAM2 and CLV1. Binds to the CLV3, CLE5, CLE11, CLE18, CLE19, CLE22, CLE25, CLE26, CLE40, CLE41 and CLE42 mature peptides, probably via its extracellular leucine-rich repeat region. In terms of tissue distribution, expressed in seedlings, roots, leaves, inflorescences, flowers and siliques.

It localises to the cell membrane. It carries out the reaction L-seryl-[protein] + ATP = O-phospho-L-seryl-[protein] + ADP + H(+). The enzyme catalyses L-threonyl-[protein] + ATP = O-phospho-L-threonyl-[protein] + ADP + H(+). Functionally, necessary for male gametophyte development, as well as ovule specification and function. Involved in cell-cell communication process required during early anther development, and regulating cell division and differentiation to organize cell layers. Required for the development of high-ordered vascular strands within the leaf and a correlated control of leaf shape, size and symmetry. May regulate the CLV1-dependent CLV3-mediated signaling in meristems maintenance. In Arabidopsis thaliana (Mouse-ear cress), this protein is Leucine-rich repeat receptor-like serine/threonine-protein kinase BAM1 (BAM1).